The primary structure comprises 590 residues: EGF-like and EMI domain-containing protein 1 (590 aa).

A signal peptide spans 1–23 (MTSPLCFWCFCVWAAANWPPGSA). In terms of domain architecture, EMI spans 44–104 (LSRPCAQAFI…RCCPGWIQWD (61 aa)). Residues 105 to 145 (DEPGCFSSLSSLGTHFSGRECSYQDTRQCLCSQGFHGPHCQ) enclose the EGF-like 1 domain. Disulfide bonds link Cys-109–Cys-125, Cys-135–Cys-144, Cys-168–Cys-179, Cys-175–Cys-188, Cys-190–Cys-203, Cys-209–Cys-219, Cys-215–Cys-228, Cys-230–Cys-243, Cys-249–Cys-260, Cys-256–Cys-269, and Cys-271–Cys-284. The EGF-like 2; calcium-binding domain maps to 164–204 (NVDECAVVNGGCQQRCINTLGTFHCECDTGYRRHADERTCI). The region spanning 205 to 244 (KTDPCAGANGCAHLCQTENGMARCACHAGYQLSEDKKACE) is the EGF-like 3 domain. The EGF-like 4; calcium-binding domain occupies 245–285 (DINECAGELAPCAHHCVNSKGSFTCTCHPGFELGADRKHCY). A disordered region spans residues 393–424 (RLAQNPPQPFPYLDPSLTASYEDEDNDDADSE). Residues 413–424 (YEDEDNDDADSE) are compositionally biased toward acidic residues. Residues 445–481 (FGLDCSLSCEDCMNGGRCQEGKSGCLCPAEWTGLICN) form the EGF-like 5 domain. Cystine bridges form between Cys-449-Cys-462, Cys-456-Cys-469, and Cys-471-Cys-480.

In Mus musculus (Mouse), this protein is EGF-like and EMI domain-containing protein 1 (Egfem1).